The primary structure comprises 185 residues: MTLAAYKEKVKELPLVSIFCSCFLSDPLKKQTYKYEADTVDLTWCAISDMEVIELNKRASGHSFEVILKPPSFDGIPEITATLPQKRDPSLEEIQKKLEAAEERRKYREAELRKHQAEKREHEREVILKAIEENNNFSKMAKEKLAQRMEVNKENREAHLAAMLERLQEKDKHAEEVRKNKEATR.

In terms of domain architecture, SLD spans 48–185; sequence SDMEVIELNK…EVRKNKEATR (138 aa). Positions 90 to 185 form a coiled coil; sequence SLEEIQKKLE…EVRKNKEATR (96 aa). Residues 165 to 185 form a disordered region; the sequence is ERLQEKDKHAEEVRKNKEATR. Residues 166 to 185 show a composition bias toward basic and acidic residues; it reads RLQEKDKHAEEVRKNKEATR.

It belongs to the stathmin family. As to expression, nervous tissue.

This Xenopus laevis (African clawed frog) protein is Stathmin-4 (stmn4).